The primary structure comprises 563 residues: Arginine--tRNA ligase (563 aa).

Positions 120 to 130 (PNIAKPFHVGH) match the 'HIGH' region motif.

This sequence belongs to the class-I aminoacyl-tRNA synthetase family. In terms of assembly, monomer.

It is found in the cytoplasm. The catalysed reaction is tRNA(Arg) + L-arginine + ATP = L-arginyl-tRNA(Arg) + AMP + diphosphate. This chain is Arginine--tRNA ligase, found in Clostridium acetobutylicum (strain ATCC 824 / DSM 792 / JCM 1419 / IAM 19013 / LMG 5710 / NBRC 13948 / NRRL B-527 / VKM B-1787 / 2291 / W).